The chain runs to 355 residues: C-C chemokine receptor type 8 (355 aa).

Residues 1 to 35 (MDYTLDLSVTTVTDYYYPDIFSSPCDAELIQTNGK) are Extracellular-facing. Residues 36–63 (LLLAVFYCLLFVFSLLGNSLVILVLVVC) traverse the membrane as a helical segment. Topologically, residues 64-73 (KKLRSITDVY) are cytoplasmic. A helical transmembrane segment spans residues 74–93 (LLNLALSDLLFVFSFPFQTY). Over 94 to 107 (YLLDQWVFGTVMCK) the chain is Extracellular. Residues C106 and C183 are joined by a disulfide bond. A helical membrane pass occupies residues 108 to 129 (VVSGFYYIGFYSSMFFITLMSV). Topologically, residues 130 to 146 (DRYLAVVHAVYALKVRT) are cytoplasmic. Residues 147–171 (IRMGTTLCLAVWLTAIMATIPLLVF) traverse the membrane as a helical segment. Over 172–202 (YQVASEDGVLQCYSFYNQQTLKWKIFTNFKM) the chain is Extracellular. A helical membrane pass occupies residues 203–222 (NILGLLIPFTIFMFCYIKIL). Residues 223–238 (HQLKRCQNHNKTKAIR) are Cytoplasmic-facing. Residues 239–263 (LVLIVVIASLLFWVPFNVVLFLTSL) form a helical membrane-spanning segment. Over 264–280 (HSMHILDGCSISQQLTY) the chain is Extracellular. Residues 281-304 (ATHVTEIISFTHCCVNPVIYAFVG) form a helical membrane-spanning segment. Over 305–355 (EKFKKHLSEIFQKSCSQIFNYLGRQMPRESCEKSSSCQQHSSRSSSVDYIL) the chain is Cytoplasmic.

The protein belongs to the G-protein coupled receptor 1 family.

Its subcellular location is the cell membrane. In terms of biological role, receptor for the chemokine CCL1/SCYA1/I-309. May regulate monocyte chemotaxis and thymic cell line apoptosis. Alternative coreceptor with CD4 for HIV-1 infection. This Homo sapiens (Human) protein is C-C chemokine receptor type 8 (CCR8).